A 420-amino-acid polypeptide reads, in one-letter code: Putative FBD-associated F-box protein At1g78730 (420 aa).

An F-box domain is found at 21-71; it reads LDWLRKLPDSLLCQVFLNLPTKDVVKTSVLSSTWGNIWRSVPGLDLGYGDF. In terms of domain architecture, FBD spans 341-390; sequence ISILPGPQCNLPALEFVDILKPMVEKETELKLMSYFLEKSTILKKLTLRL.

This is Putative FBD-associated F-box protein At1g78730 from Arabidopsis thaliana (Mouse-ear cress).